The following is a 178-amino-acid chain: UPF0302 protein BcerKBAB4_1445 (178 aa).

The protein belongs to the UPF0302 family.

The chain is UPF0302 protein BcerKBAB4_1445 from Bacillus mycoides (strain KBAB4) (Bacillus weihenstephanensis).